Reading from the N-terminus, the 626-residue chain is tRNA uridine 5-carboxymethylaminomethyl modification enzyme MnmG (626 aa).

14 to 19 contributes to the FAD binding site; sequence GAGHAG. 273–287 lines the NAD(+) pocket; the sequence is GPRYCPSIEDKVVRF.

It belongs to the MnmG family. As to quaternary structure, homodimer. Heterotetramer of two MnmE and two MnmG subunits. The cofactor is FAD.

The protein resides in the cytoplasm. In terms of biological role, NAD-binding protein involved in the addition of a carboxymethylaminomethyl (cmnm) group at the wobble position (U34) of certain tRNAs, forming tRNA-cmnm(5)s(2)U34. This Caldicellulosiruptor saccharolyticus (strain ATCC 43494 / DSM 8903 / Tp8T 6331) protein is tRNA uridine 5-carboxymethylaminomethyl modification enzyme MnmG.